We begin with the raw amino-acid sequence, 137 residues long: uncharacterized protein (137 aa).

5 helical membrane passes run 4–26, 35–57, 62–84, 89–111, and 116–135; these read AIIL…KIVC, IVVN…NIII, ILTY…YYAL, ASIV…ILFL, and TLPQ…LLSI. The EamA domain occupies 13-135; sequence VFYGVGTFFA…IIIGIILLSI (123 aa).

Its subcellular location is the cell membrane. This is an uncharacterized protein from Methanocaldococcus jannaschii (strain ATCC 43067 / DSM 2661 / JAL-1 / JCM 10045 / NBRC 100440) (Methanococcus jannaschii).